The following is a 144-amino-acid chain: D-aminoacyl-tRNA deacylase (144 aa).

The short motif at 136-137 is the Gly-cisPro motif, important for rejection of L-amino acids element; sequence GP.

Belongs to the DTD family. In terms of assembly, homodimer.

Its subcellular location is the cytoplasm. It carries out the reaction glycyl-tRNA(Ala) + H2O = tRNA(Ala) + glycine + H(+). The catalysed reaction is a D-aminoacyl-tRNA + H2O = a tRNA + a D-alpha-amino acid + H(+). Its function is as follows. An aminoacyl-tRNA editing enzyme that deacylates mischarged D-aminoacyl-tRNAs. Also deacylates mischarged glycyl-tRNA(Ala), protecting cells against glycine mischarging by AlaRS. Acts via tRNA-based rather than protein-based catalysis; rejects L-amino acids rather than detecting D-amino acids in the active site. By recycling D-aminoacyl-tRNA to D-amino acids and free tRNA molecules, this enzyme counteracts the toxicity associated with the formation of D-aminoacyl-tRNA entities in vivo and helps enforce protein L-homochirality. The polypeptide is D-aminoacyl-tRNA deacylase (Aliivibrio fischeri (strain MJ11) (Vibrio fischeri)).